The chain runs to 254 residues: Ribosomal RNA small subunit methyltransferase J (254 aa).

S-adenosyl-L-methionine-binding positions include 101–102 (RD), 117–118 (ER), 153–154 (SS), and Asp171.

This sequence belongs to the methyltransferase superfamily. RsmJ family.

Its subcellular location is the cytoplasm. The enzyme catalyses guanosine(1516) in 16S rRNA + S-adenosyl-L-methionine = N(2)-methylguanosine(1516) in 16S rRNA + S-adenosyl-L-homocysteine + H(+). Functionally, specifically methylates the guanosine in position 1516 of 16S rRNA. This chain is Ribosomal RNA small subunit methyltransferase J, found in Enterobacter sp. (strain 638).